Here is a 316-residue protein sequence, read N- to C-terminus: Deoxyribonuclease-1-like 1 (316 aa).

The N-terminal stretch at 1 to 28 (MHSSGGFQKAIHGHALLLLLLLASGAET) is a signal peptide. Residues E107 and H158 contribute to the active site. An intrachain disulfide couples C197 to C234. Residue N271 is glycosylated (N-linked (GlcNAc...) asparagine).

This sequence belongs to the DNase I family.

It is found in the endoplasmic reticulum. The chain is Deoxyribonuclease-1-like 1 (DNASE1L1) from Bos taurus (Bovine).